A 496-amino-acid chain; its full sequence is Guanosine-5'-triphosphate,3'-diphosphate pyrophosphatase (496 aa).

It belongs to the GppA/Ppx family. GppA subfamily.

It carries out the reaction guanosine 3'-diphosphate 5'-triphosphate + H2O = guanosine 3',5'-bis(diphosphate) + phosphate + H(+). Its pathway is purine metabolism; ppGpp biosynthesis; ppGpp from GTP: step 2/2. Functionally, catalyzes the conversion of pppGpp to ppGpp. Guanosine pentaphosphate (pppGpp) is a cytoplasmic signaling molecule which together with ppGpp controls the 'stringent response', an adaptive process that allows bacteria to respond to amino acid starvation, resulting in the coordinated regulation of numerous cellular activities. This is Guanosine-5'-triphosphate,3'-diphosphate pyrophosphatase from Aeromonas hydrophila subsp. hydrophila (strain ATCC 7966 / DSM 30187 / BCRC 13018 / CCUG 14551 / JCM 1027 / KCTC 2358 / NCIMB 9240 / NCTC 8049).